The chain runs to 552 residues: Segmentation polarity homeobox protein engrailed (552 aa).

Positions 93 to 108 are enriched in low complexity; it reads SGSGSPASCSTPASST. Disordered regions lie at residues 93 to 112, 130 to 171, 309 to 419, and 433 to 460; these read SGSG…PLTI, THTT…TAKP, PAAP…GGKN, and DRPS…PRTA. Residues 135-151 show a composition bias toward acidic residues; the sequence is EEEEAEEDDDIDVDVDD. Over residues 317–382 the composition is skewed to low complexity; it reads PPLSSSASSL…SGSGVNASSP (66 aa). Over residues 446 to 457 the composition is skewed to basic and acidic residues; that stretch reads QPKDKTNDEKRP. A DNA-binding region (homeobox) is located at residues 454-513; that stretch reads EKRPRTAFSSEQLARLKREFNENRYLTERRRQQLSSELGLNEAQIKIWFQNKRAKIKKST.

This sequence belongs to the engrailed homeobox family. In terms of processing, phosphorylated. Phosphorylation may directly or allosterically modify its function.

It is found in the nucleus. Its function is as follows. This protein specifies the body segmentation pattern. It is required for the development of the central nervous system. Transcriptional regulator that represses activated promoters. Wg signaling operates by inactivating the SGG repression of EN autoactivation. The protein is Segmentation polarity homeobox protein engrailed (en) of Drosophila melanogaster (Fruit fly).